The chain runs to 224 residues: Magnesium-protoporphyrin O-methyltransferase (224 aa).

It belongs to the class I-like SAM-binding methyltransferase superfamily. Magnesium protoporphyrin O-methyltransferase family.

It carries out the reaction Mg-protoporphyrin IX + S-adenosyl-L-methionine = Mg-protoporphyrin IX 13-monomethyl ester + S-adenosyl-L-homocysteine. It participates in porphyrin-containing compound metabolism; bacteriochlorophyll biosynthesis (light-independent). Converts Mg-protoporphyrin IX to Mg-protoporphyrin IX methylester using S-adenosyl-L-methionine as a cofactor. In Rhodobacter capsulatus (Rhodopseudomonas capsulata), this protein is Magnesium-protoporphyrin O-methyltransferase (bchM).